A 370-amino-acid polypeptide reads, in one-letter code: L-selectin (370 aa).

The signal sequence occupies residues 1–28; the sequence is MLCPWKCQNAQRGLWNVFKLWVWIMLCC. Positions 29–38 are excised as a propeptide; it reads DFFAHHGTDC. At 39 to 333 the chain is on the extracellular side; the sequence is WTYHYSKRPM…SINEESDYNP (295 aa). The C-type lectin domain maps to 55–155; sequence AFCRENYTDL…ACHKAKTALC (101 aa). Cystine bridges form between Cys57–Cys155, Cys128–Cys147, Cys128–Cys160, Cys160–Cys171, Cys165–Cys180, Cys182–Cys191, Cys197–Cys241, Cys227–Cys254, Cys259–Cys303, and Cys289–Cys316. 3 N-linked (GlcNAc...) asparagine glycosylation sites follow: Asn60, Asn77, and Asn104. The Ca(2+) site is built by Glu118, Asn120, Glu126, Asn143, and Asp144. The EGF-like domain occupies 156-192; the sequence is YTASCKPWSCSGHGQCVEVINNYTCNCDLGYYGPECQ. Residue Asn177 is glycosylated (N-linked (GlcNAc...) asparagine). 2 consecutive Sushi domains span residues 195–256 and 257–318; these read TQCV…TCRV and IQCE…RCQK. Residues Asn216, Asn226, and Asn246 are each glycosylated (N-linked (GlcNAc...) asparagine). Asn308 and Asn320 each carry an N-linked (GlcNAc...) asparagine glycan. The helical transmembrane segment at 334-354 threads the bilayer; sequence LFIPVAVMVTAFSGLAFIIWL. The Cytoplasmic segment spans residues 355–370; sequence ARRLKRKSKKVSEKHG.

It belongs to the selectin/LECAM family. As to quaternary structure, interaction with SELPLG/PSGL1 and PODXL2 is required for promoting recruitment and rolling of leukocytes. This interaction is dependent on the sialyl Lewis X glycan modification of SELPLG and PODXL2, and tyrosine sulfation modifications of SELPLG. Sulfation on 'Tyr-51' of SELPLG is important for L-selectin binding. In terms of processing, N-glycosylated. In terms of tissue distribution, highly expressed in lymphocytes from peripheral lymph nodes. Low in lymphocytes isolated from Peyer patches.

The protein localises to the cell membrane. Its function is as follows. Calcium-dependent lectin that mediates cell adhesion by binding to glycoproteins on neighboring cells. Mediates the adherence of lymphocytes to endothelial cells of high endothelial venules in peripheral lymph nodes. Promotes initial tethering and rolling of leukocytes in endothelia. In Bos taurus (Bovine), this protein is L-selectin (SELL).